We begin with the raw amino-acid sequence, 211 residues long: Large ribosomal subunit protein uL4 (211 aa).

A disordered region spans residues 40–85; it reads QQAHSRQGTASTLTRSEVRGGGRKPYKQKGTGRARQGSIRTPLRPG. A compositionally biased stretch (polar residues) spans 41–54; the sequence is QAHSRQGTASTLTR. A compositionally biased stretch (basic residues) spans 60 to 71; sequence GGRKPYKQKGTG.

It belongs to the universal ribosomal protein uL4 family. As to quaternary structure, part of the 50S ribosomal subunit.

One of the primary rRNA binding proteins, this protein initially binds near the 5'-end of the 23S rRNA. It is important during the early stages of 50S assembly. It makes multiple contacts with different domains of the 23S rRNA in the assembled 50S subunit and ribosome. Functionally, forms part of the polypeptide exit tunnel. The protein is Large ribosomal subunit protein uL4 of Prochlorococcus marinus (strain NATL2A).